Consider the following 515-residue polypeptide: Bifunctional purine biosynthesis protein PurH (515 aa).

Residues Met1–Val144 form the MGS-like domain.

This sequence belongs to the PurH family.

The catalysed reaction is (6R)-10-formyltetrahydrofolate + 5-amino-1-(5-phospho-beta-D-ribosyl)imidazole-4-carboxamide = 5-formamido-1-(5-phospho-D-ribosyl)imidazole-4-carboxamide + (6S)-5,6,7,8-tetrahydrofolate. It catalyses the reaction IMP + H2O = 5-formamido-1-(5-phospho-D-ribosyl)imidazole-4-carboxamide. Its pathway is purine metabolism; IMP biosynthesis via de novo pathway; 5-formamido-1-(5-phospho-D-ribosyl)imidazole-4-carboxamide from 5-amino-1-(5-phospho-D-ribosyl)imidazole-4-carboxamide (10-formyl THF route): step 1/1. It participates in purine metabolism; IMP biosynthesis via de novo pathway; IMP from 5-formamido-1-(5-phospho-D-ribosyl)imidazole-4-carboxamide: step 1/1. The chain is Bifunctional purine biosynthesis protein PurH from Persephonella marina (strain DSM 14350 / EX-H1).